A 323-amino-acid chain; its full sequence is tRNA dimethylallyltransferase (323 aa).

Position 16–23 (16–23) interacts with ATP; the sequence is GPTASGKT. 18 to 23 serves as a coordination point for substrate; that stretch reads TASGKT. Interaction with substrate tRNA stretches follow at residues 41-44, 165-169, 253-258, and 286-293; these read DSAL, QRIQR, RCVGYR, and KRQITWLR.

The protein belongs to the IPP transferase family. Monomer. It depends on Mg(2+) as a cofactor.

It carries out the reaction adenosine(37) in tRNA + dimethylallyl diphosphate = N(6)-dimethylallyladenosine(37) in tRNA + diphosphate. Catalyzes the transfer of a dimethylallyl group onto the adenine at position 37 in tRNAs that read codons beginning with uridine, leading to the formation of N6-(dimethylallyl)adenosine (i(6)A). This Ralstonia nicotianae (strain ATCC BAA-1114 / GMI1000) (Ralstonia solanacearum) protein is tRNA dimethylallyltransferase.